Here is a 121-residue protein sequence, read N- to C-terminus: uncharacterized protein (121 aa).

Transmembrane regions (helical) follow at residues 1–21 (MILW…IMPV), 55–75 (LKYI…FCSI), and 92–112 (LFFK…IHFL).

Its subcellular location is the membrane. This is an uncharacterized protein from Saccharomyces cerevisiae (strain ATCC 204508 / S288c) (Baker's yeast).